A 217-amino-acid chain; its full sequence is Large ribosomal subunit protein uL4c (217 aa).

Residues 51-85 form a disordered region; that stretch reads HRNRNAHTQTRGEVSGGGRKPWKQKGTGRARAGSN.

The protein belongs to the universal ribosomal protein uL4 family. In terms of assembly, part of the 50S ribosomal subunit.

It localises to the plastid. It is found in the chloroplast. In terms of biological role, probably binds the 23S rRNA. The protein is Large ribosomal subunit protein uL4c (rpl4) of Gracilaria tenuistipitata var. liui (Red alga).